The sequence spans 276 residues: Secretagogin (276 aa).

5 EF-hand domains span residues 12–47, 105–140, 149–184, 197–232, and 240–276; these read LDAA…LLAK, DNSV…LFLH, ELEE…QENF, ERKR…MMEL, and VDLD…KINP. Residues Asp-118, Asp-120, Ser-122, Glu-129, Asp-162, Asn-164, Asp-166, Arg-168, Asp-173, Asp-210, Ser-212, Thr-214, Glu-221, Asp-254, Asn-256, Asp-258, Lys-260, and Glu-265 each contribute to the Ca(2+) site.

As to expression, highly expressed in pancreas, in particular in pancreatic islets and pancreatic beta-cells. Detected in prostate, adrenal gland, small intestine, stomach and thyroid (at protein level).

Its subcellular location is the cytoplasm. It localises to the secreted. The protein localises to the cytoplasmic vesicle. The protein resides in the secretory vesicle membrane. In Rattus norvegicus (Rat), this protein is Secretagogin (Scgn).